The following is a 429-amino-acid chain: Enolase (429 aa).

Residue glutamine 163 participates in (2R)-2-phosphoglycerate binding. Residue glutamate 205 is the Proton donor of the active site. Residues aspartate 242, glutamate 285, and aspartate 312 each coordinate Mg(2+). 4 residues coordinate (2R)-2-phosphoglycerate: lysine 337, arginine 366, serine 367, and lysine 388. Lysine 337 acts as the Proton acceptor in catalysis.

It belongs to the enolase family. Mg(2+) serves as cofactor.

The protein localises to the cytoplasm. It is found in the secreted. The protein resides in the cell surface. It carries out the reaction (2R)-2-phosphoglycerate = phosphoenolpyruvate + H2O. The protein operates within carbohydrate degradation; glycolysis; pyruvate from D-glyceraldehyde 3-phosphate: step 4/5. Catalyzes the reversible conversion of 2-phosphoglycerate (2-PG) into phosphoenolpyruvate (PEP). It is essential for the degradation of carbohydrates via glycolysis. The sequence is that of Enolase from Azoarcus sp. (strain BH72).